Reading from the N-terminus, the 538-residue chain is DALR anticodon-binding domain-containing protein 3 (538 aa).

Part of a complex containing tRNA(Arg) and METTL2. Interacts with tRNA(Arg)(CCU) and tRNA(Arg)(UCU). Interacts with METTL2.

Involved in tRNA methylation. Facilitates the recognition and targeting of tRNA(Arg)(CCU) and tRNA(Arg)(UCU) substrates for N(3)-methylcytidine modification by METTL2. This chain is DALR anticodon-binding domain-containing protein 3 (Dalrd3), found in Rattus norvegicus (Rat).